The primary structure comprises 251 residues: Triosephosphate isomerase (251 aa).

Position 9–11 (Asn9–Lys11) interacts with substrate. His95 acts as the Electrophile in catalysis. Glu167 functions as the Proton acceptor in the catalytic mechanism. Substrate-binding positions include Gly173, Ser212, and Gly233 to Gly234.

The protein belongs to the triosephosphate isomerase family. In terms of assembly, homodimer.

The protein resides in the cytoplasm. It carries out the reaction D-glyceraldehyde 3-phosphate = dihydroxyacetone phosphate. It functions in the pathway carbohydrate biosynthesis; gluconeogenesis. It participates in carbohydrate degradation; glycolysis; D-glyceraldehyde 3-phosphate from glycerone phosphate: step 1/1. Its function is as follows. Involved in the gluconeogenesis. Catalyzes stereospecifically the conversion of dihydroxyacetone phosphate (DHAP) to D-glyceraldehyde-3-phosphate (G3P). This is Triosephosphate isomerase from Pseudomonas paraeruginosa (strain DSM 24068 / PA7) (Pseudomonas aeruginosa (strain PA7)).